The chain runs to 186 residues: Elongation factor P (186 aa).

The protein belongs to the elongation factor P family.

The protein localises to the cytoplasm. It participates in protein biosynthesis; polypeptide chain elongation. In terms of biological role, involved in peptide bond synthesis. Stimulates efficient translation and peptide-bond synthesis on native or reconstituted 70S ribosomes in vitro. Probably functions indirectly by altering the affinity of the ribosome for aminoacyl-tRNA, thus increasing their reactivity as acceptors for peptidyl transferase. In Shewanella baltica (strain OS223), this protein is Elongation factor P.